Here is a 797-residue protein sequence, read N- to C-terminus: Leucine-rich repeat-containing protein AAC1 (797 aa).

The span at 1 to 12 (MKRTSNRNEEAT) shows a compositional bias: basic and acidic residues. Disordered regions lie at residues 1–20 (MKRT…SSTT), 51–103 (YSLF…TTTT), 125–148 (NLPT…TTTT), and 307–333 (HSTS…TITA). Positions 55–81 (NEPNNDNDTNSSTRPNKQQKLLKSNES) are enriched in polar residues. Positions 82 to 103 (TTSTTTTTTPITTTTTTTTTTT) are enriched in low complexity. The span at 313–326 (SSPPPPPPPPPPQI) shows a compositional bias: pro residues. LRR repeat units lie at residues 376–397 (KLKK…DFFS), 406–425 (TLET…QLLS), 435–456 (VLKR…YLNK), 464–484 (QLET…IMMK), 492–513 (SLKE…DFGK), 514–535 (SITS…KGLS), 543–564 (SITS…KSLS), 572–593 (TLKF…DHLV), 601–622 (SIHS…TLSQ), and 633–653 (PFKY…KKLI).

This chain is Leucine-rich repeat-containing protein AAC1 (AAC1), found in Dictyostelium discoideum (Social amoeba).